Reading from the N-terminus, the 114-residue chain is PDZK1-interacting protein 1 (114 aa).

Residues 1–28 (MSVLSLVVLSLLMALPPASCQQGRGNLQ) are Extracellular-facing. Residues 29–51 (PWMQGLIAVAVFLVLVAIAFAVN) form a helical membrane-spanning segment. Residues 52–114 (HFWCQEKPAP…EEGKVCSTPM (63 aa)) lie on the Cytoplasmic side of the membrane. S85 carries the phosphoserine modification.

Belongs to the PDZK1-interacting protein 1/SMIM24 family. As to quaternary structure, forms a heterodimer (via N-terminal transmembrane helix) with SLC5A2/SGLT2 (via TM13); this interaction enhances SLC5A2 transporter activity. Interacts with PDZK1.

It localises to the apical cell membrane. Auxiliary protein of electrogenic Na(+)-coupled sugar symporter SLC5A2/SGLT2 and SLC5A1/SGLT1. Essential for the transporter activity of SLC5A2/SGLT2 but not SLC5A1/SGLT1. The sequence is that of PDZK1-interacting protein 1 from Bos taurus (Bovine).